The sequence spans 369 residues: MHGESPIKRRESRKIWVGNVPVGGDAPIAVQSMTNTDTNDVAATVAQIQRLVDAGVDIVRVSVPDMDAAEAFGKIKQRVSVPLVADIHFDYKIALRVAELGVDCLRINPGNIGREDRVRAVVDAARDRGIPIRIGVNAGSLEKDLQKKYGEPTPAALVESALRHVEHLDRLDFQDFKVSVKASDVFMAVEAYRLLAKQIVQPLHLGITEAGGLRSGTVKSAVGLGMLLAEGIGDTIRISLAADPVEEVKVGYDILKSLHLRSRGINFIACPSCSRQNFDVVKTMNELEGRLEDLLVPLDVAVIGCVVNGPGEAKEAHVGLTGGTPNLIYIDGKPAQKLTNDNLVDELEKLIRQKAAEKAEADAALIARG.

Cys270, Cys273, Cys305, and Glu312 together coordinate [4Fe-4S] cluster.

It belongs to the IspG family. [4Fe-4S] cluster is required as a cofactor.

It carries out the reaction (2E)-4-hydroxy-3-methylbut-2-enyl diphosphate + oxidized [flavodoxin] + H2O + 2 H(+) = 2-C-methyl-D-erythritol 2,4-cyclic diphosphate + reduced [flavodoxin]. It participates in isoprenoid biosynthesis; isopentenyl diphosphate biosynthesis via DXP pathway; isopentenyl diphosphate from 1-deoxy-D-xylulose 5-phosphate: step 5/6. In terms of biological role, converts 2C-methyl-D-erythritol 2,4-cyclodiphosphate (ME-2,4cPP) into 1-hydroxy-2-methyl-2-(E)-butenyl 4-diphosphate. The polypeptide is 4-hydroxy-3-methylbut-2-en-1-yl diphosphate synthase (flavodoxin) (Pseudomonas putida (strain ATCC 47054 / DSM 6125 / CFBP 8728 / NCIMB 11950 / KT2440)).